A 400-amino-acid chain; its full sequence is Phosphoglycerate kinase (400 aa).

Substrate contacts are provided by residues 22-24 (DFN), arginine 38, 61-64 (HLGR), arginine 120, and arginine 153. ATP-binding positions include lysine 206, glycine 297, glutamate 328, and 354–357 (GGDT).

This sequence belongs to the phosphoglycerate kinase family. In terms of assembly, monomer.

It localises to the cytoplasm. It carries out the reaction (2R)-3-phosphoglycerate + ATP = (2R)-3-phospho-glyceroyl phosphate + ADP. It functions in the pathway carbohydrate degradation; glycolysis; pyruvate from D-glyceraldehyde 3-phosphate: step 2/5. The sequence is that of Phosphoglycerate kinase from Campylobacter curvus (strain 525.92).